The chain runs to 415 residues: Multifunctional CCA protein (415 aa).

Positions 8 and 11 each coordinate ATP. Residues G8 and R11 each coordinate CTP. Positions 21 and 23 each coordinate Mg(2+). Positions 91, 143, and 146 each coordinate ATP. Residues R91, R143, and R146 each coordinate CTP. An HD domain is found at 232-333 (TGVHVMMVID…VRLLERCDAL (102 aa)).

Belongs to the tRNA nucleotidyltransferase/poly(A) polymerase family. Bacterial CCA-adding enzyme type 1 subfamily. Monomer. Can also form homodimers and oligomers. Requires Mg(2+) as cofactor. Ni(2+) is required as a cofactor.

The enzyme catalyses a tRNA precursor + 2 CTP + ATP = a tRNA with a 3' CCA end + 3 diphosphate. The catalysed reaction is a tRNA with a 3' CCA end + 2 CTP + ATP = a tRNA with a 3' CCACCA end + 3 diphosphate. In terms of biological role, catalyzes the addition and repair of the essential 3'-terminal CCA sequence in tRNAs without using a nucleic acid template. Adds these three nucleotides in the order of C, C, and A to the tRNA nucleotide-73, using CTP and ATP as substrates and producing inorganic pyrophosphate. tRNA 3'-terminal CCA addition is required both for tRNA processing and repair. Also involved in tRNA surveillance by mediating tandem CCA addition to generate a CCACCA at the 3' terminus of unstable tRNAs. While stable tRNAs receive only 3'-terminal CCA, unstable tRNAs are marked with CCACCA and rapidly degraded. This chain is Multifunctional CCA protein, found in Cupriavidus taiwanensis (strain DSM 17343 / BCRC 17206 / CCUG 44338 / CIP 107171 / LMG 19424 / R1) (Ralstonia taiwanensis (strain LMG 19424)).